The following is a 209-amino-acid chain: Urease accessory protein UreG (209 aa).

10–17 (GPVGSGKT) contributes to the GTP binding site.

This sequence belongs to the SIMIBI class G3E GTPase family. UreG subfamily. As to quaternary structure, homodimer. UreD, UreF and UreG form a complex that acts as a GTP-hydrolysis-dependent molecular chaperone, activating the urease apoprotein by helping to assemble the nickel containing metallocenter of UreC. The UreE protein probably delivers the nickel.

It localises to the cytoplasm. Its function is as follows. Facilitates the functional incorporation of the urease nickel metallocenter. This process requires GTP hydrolysis, probably effectuated by UreG. This is Urease accessory protein UreG from Lysinibacillus sphaericus (strain C3-41).